The sequence spans 122 residues: MIQQESELEVADNSGAKRVKCFKVLGGSKRRYAHVGDIVVASVQDAHPEGSVKKGDVVKVVIIRTKSYIKRKDGTKIRFDTNSCVLIDDKKNPKGTRIFGPVAREVRDRDFLKISSLAPEVI.

It belongs to the universal ribosomal protein uL14 family. As to quaternary structure, part of the 50S ribosomal subunit. Forms a cluster with proteins L3 and L19. In the 70S ribosome, L14 and L19 interact and together make contacts with the 16S rRNA in bridges B5 and B8.

Functionally, binds to 23S rRNA. Forms part of two intersubunit bridges in the 70S ribosome. This chain is Large ribosomal subunit protein uL14, found in Protochlamydia amoebophila (strain UWE25).